Here is a 64-residue protein sequence, read N- to C-terminus: Large ribosomal subunit protein bL32 (64 aa).

The interval 1–35 is disordered; it reads MAVQKSRVTPSRRGMRRAHDALSAKQLSTDPTTGE.

It belongs to the bacterial ribosomal protein bL32 family.

The polypeptide is Large ribosomal subunit protein bL32 (Stenotrophomonas maltophilia (strain R551-3)).